The following is a 155-amino-acid chain: uncharacterized protein (155 aa).

Residues 1–30 (MTYNTNTSLSSYAGLSAFALSVFCILWGTA) form the signal peptide.

This is an uncharacterized protein from Treponema pallidum (strain Nichols).